We begin with the raw amino-acid sequence, 513 residues long: Protein CYCLOPS (513 aa).

Residues 327–435 are disordered; the sequence is QIHGGTASGE…ERSRKMAEAK (109 aa). Positions 334–347 are enriched in low complexity; the sequence is SGEPSQSESSAAAP. Polar residues predominate over residues 359–381; sequence PSNSSQTLCDSSWKQVGESTQNR. The segment covering 384–396 has biased composition (basic and acidic residues); the sequence is GVREQIMDNLKDD. 2 consecutive short sequence motifs (nuclear localization signal) follow at residues 397–401 and 421–424; these read RKRKR and KKRR. Residues 447–513 are a coiled coil; sequence MQAVMKRCEN…ERLLSETGKI (67 aa).

Belongs to the CYCLOPS family.

The protein resides in the nucleus. Involved symbiotic signaling. Required for root infection by symbiotic rhizobia, infection thread (IT) formation, and nodule development. Required for symbiosome formation (i.e. the release of the bacteria from the ITs) and subsequent symbiosome development. Involved in arbuscular mycorrhizal (AM) symbiosis. The polypeptide is Protein CYCLOPS (Pisum sativum (Garden pea)).